A 1066-amino-acid chain; its full sequence is Beta-galactosidase (1066 aa).

Substrate-binding residues include Asn110 and Asp209. Asp209 is a binding site for Na(+). Residues Glu432, His434, and Glu477 each contribute to the Mg(2+) site. Residues Glu477 and 553 to 556 (EYAH) each bind substrate. Residue Glu477 is the Proton donor of the active site. Glu553 serves as the catalytic Nucleophile. A Mg(2+)-binding site is contributed by Asn613. Na(+)-binding residues include Phe617 and Asn620. Substrate is bound by residues Asn620 and Trp1041.

It belongs to the glycosyl hydrolase 2 family. Homotetramer. Mg(2+) serves as cofactor. Requires Na(+) as cofactor.

It catalyses the reaction Hydrolysis of terminal non-reducing beta-D-galactose residues in beta-D-galactosides.. The sequence is that of Beta-galactosidase from Yersinia pseudotuberculosis serotype O:1b (strain IP 31758).